A 407-amino-acid chain; its full sequence is Probable tRNA pseudouridine synthase D (407 aa).

Asp-81 serves as the catalytic Nucleophile. The 222-residue stretch at 151–372 folds into the TRUD domain; the sequence is GFPNYFGIQR…PGGRRELLIR (222 aa).

It belongs to the pseudouridine synthase TruD family.

It catalyses the reaction uridine(13) in tRNA = pseudouridine(13) in tRNA. Functionally, could be responsible for synthesis of pseudouridine from uracil-13 in transfer RNAs. This Pyrococcus furiosus (strain ATCC 43587 / DSM 3638 / JCM 8422 / Vc1) protein is Probable tRNA pseudouridine synthase D.